Here is a 497-residue protein sequence, read N- to C-terminus: Virion host shutoff protein (497 aa).

2 disordered regions span residues 122-142 (EHDTEFQEDPEENDVSVPPQD) and 280-373 (SVIS…SAEA). Over residues 309 to 326 (PNERRVISWRRQDDHDYD) the composition is skewed to basic and acidic residues. Over residues 327 to 344 (SSTEDSDQSDSSEEEEEC) the composition is skewed to acidic residues.

This sequence belongs to the herpesviridae VHS protein family.

Its subcellular location is the virion. Its function is as follows. Minor structural protein that acts as an endoribonuclease during lytic infection. Degrades host mRNAs in the cytoplasm by cutting them at preferred sites, including some in regions of translation initiation. The protein is Virion host shutoff protein of Equine herpesvirus 1 (strain Ab4p) (EHV-1).